The following is an 86-amino-acid chain: Precursor of CEP4 (86 aa).

A signal peptide spans 1-30; the sequence is MVSRGCSITVLFRFLIVLLVIQVHFENTKA. The propeptide occupies 31 to 64; that stretch reads ARHAPVVSWSPPEPPKDDFVWYHKINRFKNIEQD. The disordered stretch occupies residues 63–86; that stretch reads QDAFRPTHQGPSQGIGHKNPPGAP. Hydroxyproline occurs at positions 68 and 73. Residues 80 to 86 constitute a propeptide that is removed on maturation; the sequence is KNPPGAP.

Belongs to the C-terminally encoded plant signaling peptide (CEP) family. In terms of assembly, interacts with CEP receptors (e.g. CEPR1 and CEPR2). The mature small signaling peptide is generated by proteolytic processing of the longer precursor. Expressed at low levels in flowers. Present in lateral roots, shoot apical meristem (SAM), flowers and siliques.

It is found in the secreted. It localises to the extracellular space. The protein resides in the apoplast. Functionally, extracellular signaling peptide that represses primary root growth rate. Promotes shoot growth and modulates leaf morphology. Regulates systemic nitrogen (N)-demand signaling. Mediates up-regulation of genes involved in N uptake and assimilation pathways. The sequence is that of Precursor of CEP4 from Arabidopsis thaliana (Mouse-ear cress).